The chain runs to 48 residues: Sperm protamine R3 isoform 2 (48 aa).

The span at 1–29 shows a compositional bias: basic residues; the sequence is ARRRHSMKKKRKSVRRRKTRKNQRKRKNS. The disordered stretch occupies residues 1–48; it reads ARRRHSMKKKRKSVRRRKTRKNQRKRKNSLGRSFKAHGFLKQPPRFRP.

As to expression, testis.

The protein localises to the nucleus. It is found in the chromosome. Protamines substitute for histones in the chromatin of sperm during the haploid phase of spermatogenesis. They compact sperm DNA into a highly condensed, stable and inactive complex. The polypeptide is Sperm protamine R3 isoform 2 (Hydrolagus colliei (Spotted ratfish)).